We begin with the raw amino-acid sequence, 360 residues long: Transcription elongation factor, mitochondrial (360 aa).

The transit peptide at 1–35 (MSGSVLFTAGERWRCFLTPSRSSLYWALHNFCCRK) directs the protein to the mitochondrion.

Belongs to the TEFM family. In terms of assembly, interacts with POLRMT.

The protein resides in the mitochondrion matrix. It is found in the mitochondrion nucleoid. Its function is as follows. Transcription elongation factor which increases mitochondrial RNA polymerase processivity. Regulates transcription of the mitochondrial genome, including genes important for the oxidative phosphorylation machinery. This chain is Transcription elongation factor, mitochondrial (TEFM), found in Homo sapiens (Human).